Here is a 90-residue protein sequence, read N- to C-terminus: Large ribosomal subunit protein bL27 (90 aa).

The tract at residues M1–G22 is disordered.

It belongs to the bacterial ribosomal protein bL27 family.

The sequence is that of Large ribosomal subunit protein bL27 from Allorhizobium ampelinum (strain ATCC BAA-846 / DSM 112012 / S4) (Agrobacterium vitis (strain S4)).